Here is a 287-residue protein sequence, read N- to C-terminus: MIIAVYGKGGVGKSTTTSNLAVAIAKTGRRVLQIGCDPKSDSTFTIAGRMIPTVVEILDKFNYHYESIEPDDLVVQGYAGVCVVETGGPPAGSGCGGYVVGETVKLLEKLDIMRQYDVILFDVLGDVVCGGFATPLQYADLACIVSSNDFDALFAANRICESIVEKNASGYDVKLAGVIGNRCDQVDLLETFTRRIEAPLMGVVPRNEEVRQSRVKGYTLFELEEMGEPVSEMTGEFRKMAAYLLSQPDGVVPNAVGTREMFELFRGEDLPWKGSNGKTAASTPSVP.

Residues 10-15 (GVGKST) and Lys-39 each bind ATP. Position 14 (Ser-14) interacts with Mg(2+). Positions 95 and 129 each coordinate [4Fe-4S] cluster. 181-182 (NR) lines the ATP pocket.

It belongs to the NifH/BchL/ChlL family. As to quaternary structure, homodimer. Protochlorophyllide reductase is composed of three subunits; BchL, BchN and BchB. The cofactor is [4Fe-4S] cluster.

The enzyme catalyses chlorophyllide a + oxidized 2[4Fe-4S]-[ferredoxin] + 2 ADP + 2 phosphate = protochlorophyllide a + reduced 2[4Fe-4S]-[ferredoxin] + 2 ATP + 2 H2O. Its pathway is porphyrin-containing compound metabolism; bacteriochlorophyll biosynthesis (light-independent). Functionally, component of the dark-operative protochlorophyllide reductase (DPOR) that uses Mg-ATP and reduced ferredoxin to reduce ring D of protochlorophyllide (Pchlide) to form chlorophyllide a (Chlide). This reaction is light-independent. The L component serves as a unique electron donor to the NB-component of the complex, and binds Mg-ATP. In Heliobacterium modesticaldum (strain ATCC 51547 / Ice1), this protein is Light-independent protochlorophyllide reductase iron-sulfur ATP-binding protein.